Consider the following 168-residue polypeptide: Prespore-specific protein A (168 aa).

The signal sequence occupies residues Met1 to Ala19. 13 O-linked (GlcNAc) threonine glycosylation sites follow: Thr110, Thr114, Thr116, Thr118, Thr120, Thr122, Thr124, Thr126, Thr128, Thr130, Thr132, Thr134, and Thr138. 3 tandem repeats follow at residues Thr116–Val119, Thr120–Val123, and Thr124–Val127. Positions Thr116–Val127 are 3 X 4 AA tandem repeats of T-P-T-V. Low complexity predominate over residues Thr116–Pro131. The tract at residues Thr116 to Gly147 is disordered. A glycan (O-linked (GlcNAc) serine) is linked at Ser140. Gly147 is lipidated: GPI-like-anchor amidated glycine. Residues Ser148–Cys168 constitute a propeptide, removed in mature form.

Belongs to the ponticulin family. Post-translationally, O-glycosylated in the repeat region. The oligosaccharides contain N-acetylglucosamine and fucose as the major constituents. In terms of processing, the GPI-like-anchor contains a phosphoceramide group, rather than a phosphatidyl group.

Its subcellular location is the cell membrane. May bind F-actin and nucleates actin assembly. The chain is Prespore-specific protein A (pspA) from Dictyostelium discoideum (Social amoeba).